The sequence spans 146 residues: Hemoglobin subunit beta (146 aa).

The Globin domain maps to 2 to 146 (QWTAEEKQLI…VAHALARKYH (145 aa)). Heme b is bound by residues histidine 63 and histidine 92.

The protein belongs to the globin family. Heterotetramer of two alpha chains and two beta chains. Red blood cells.

Its function is as follows. Involved in oxygen transport from the lung to the various peripheral tissues. This chain is Hemoglobin subunit beta (HBB), found in Passer montanus (Eurasian tree sparrow).